Reading from the N-terminus, the 103-residue chain is Histone H4 (103 aa).

Positions 1-14 (MSGRGKGGKGLGKG) are enriched in gly residues. Positions 1 to 20 (MSGRGKGGKGLGKGGAKRHR) are disordered. N-acetylserine is present on serine 2. N6-acetyl-N6-methyllysine; alternate occurs at positions 6 and 13. N6-acetyllysine is present on lysine 17. Residues 17-21 (KRHRK) mediate DNA binding. Lysine 21 carries the N6-methyllysine modification.

This sequence belongs to the histone H4 family. The nucleosome is a histone octamer containing two molecules each of H2A, H2B, H3 and H4 assembled in one H3-H4 heterotetramer and two H2A-H2B heterodimers. The octamer wraps approximately 147 bp of DNA.

The protein resides in the nucleus. Its subcellular location is the chromosome. Core component of nucleosome. Nucleosomes wrap and compact DNA into chromatin, limiting DNA accessibility to the cellular machineries which require DNA as a template. Histones thereby play a central role in transcription regulation, DNA repair, DNA replication and chromosomal stability. DNA accessibility is regulated via a complex set of post-translational modifications of histones, also called histone code, and nucleosome remodeling. This is Histone H4 from Holothuria tubulosa (Tubular sea cucumber).